Consider the following 68-residue polypeptide: Protein SlyX homolog (68 aa).

The protein belongs to the SlyX family.

The sequence is that of Protein SlyX homolog from Pseudomonas syringae pv. syringae (strain B728a).